The sequence spans 590 residues: FAD-linked oxidoreductase malF (590 aa).

Residues 1–18 (MKYTATFALLILAIGIQT) form the signal peptide. N-linked (GlcNAc...) asparagine glycans are attached at residues asparagine 44, asparagine 80, asparagine 103, asparagine 178, and asparagine 396. Residues 117–303 (AQGRIPLYSA…TSVTLRAFAD (187 aa)) enclose the FAD-binding PCMH-type domain.

It belongs to the oxygen-dependent FAD-linked oxidoreductase family. Requires FAD as cofactor.

Functionally, FAD-linked oxidoreductase; part of the gene cluster that mediates the biosynthesis of malbrancheamide, a dichlorinated fungal indole alkaloid that belongs to a family of natural products containing a characteristic bicyclo[2.2.2]diazaoctane core. The first step of malbrancheamide biosynthesis involves coupling of L-proline and L-tryptophan by malG, a bimodular NRPS, to produce L-Pro-L-Trp aldehyde through reductive offloading. This compound undergoes spontaneous cyclization and dehydration to give a dienamine which is reverse prenylated at C-2 by malE. The other prenyltransferase present in the cluster, malB, displays modest activity, suggesting that may be a redundant gene in the pathway. Subsequently, a [4+2] Diels-Alder cyclo-addition catalyzed by the bifunctional enzyme malC forms the characteristic bicyclo[2.2.2]diazaoctane ring of premalbrancheamid. Finally, the flavin-dependent halogenase malA catalyzes the iterative dichlorination of the indole ring of premalbrancheamide to yield C-9 monochlorinated malbrancheamide B, C-8 monochlorinated isomalbrancheamide B, and dichlorinated malbrancheamide. MalA is also able to brominate premalbrancheamide at C-9 to yield malbrancheamide C, and, to a lesser extend, at C-8 to yield isomalbrancheamide C. Finally, malA can brominate C-9 monochlorinated malbrancheamide B at C-8 to yield malbrancheamide D, or C-8 monochlorinated isomalbrancheamide B at C-9 to produce isomalbrancheamide D. The sequence is that of FAD-linked oxidoreductase malF from Malbranchea aurantiaca.